The following is a 263-amino-acid chain: Glycerol uptake facilitator protein (263 aa).

The Cytoplasmic segment spans residues 1–7 (MNIYRKK). The helical transmembrane segment at 8 to 36 (NIIKKCFMEFFGTGLVMFFGIGCLAASKL) threads the bilayer. Residues 37–41 (TNANF) lie on the Extracellular side of the membrane. The helical transmembrane segment at 42-62 (TQFEISCIWGFGVSIAIYFSS) threads the bilayer. Over 63–65 (SIS) the chain is Cytoplasmic. The stretch at 66-69 (GAHL) is an intramembrane region. Residues 70–72 (NPA) carry the NPA 1 motif. The segment at residues 70–80 (NPAVTIFFWLS) is an intramembrane region (helical). The Cytoplasmic segment spans residues 81–86 (SKLNKR). Residues 87 to 110 (KVLPYIISQTLGSFFFTMLTYYLY) form a helical membrane-spanning segment. At 111 to 145 (NNLLISFERNNNVVRGTQESLNLASIFCVYPNYNN) the chain is on the extracellular side. A helical transmembrane segment spans residues 146–171 (SFIYDFIIEIFSTALFILIVLEFNNR). The Cytoplasmic segment spans residues 172 to 181 (NSNYFLYNRS). A helical membrane pass occupies residues 182–198 (VAPILTGFLVCMINLVI). Residues 199–202 (NPLN) are Extracellular-facing. An intramembrane segment occupies 203–206 (NISL). Residues 207 to 209 (NPA) carry the NPA 2 motif. Positions 207–220 (NPARDLGPKILLSL) form an intramembrane region, helical. Residues 221–236 (TGWGLFSFTGGNDNIL) lie on the Extracellular side of the membrane. Residues 237 to 259 (YCFIPIMGPILGANLGGWIHKTL) traverse the membrane as a helical segment. Residues 260–263 (INNS) lie on the Cytoplasmic side of the membrane.

It belongs to the MIP/aquaporin (TC 1.A.8) family.

It localises to the cell membrane. It catalyses the reaction glycerol(in) = glycerol(out). In terms of biological role, mediates glycerol diffusion across the cytoplasmic membrane via a pore-type mechanism. The sequence is that of Glycerol uptake facilitator protein (glpF) from Buchnera aphidicola subsp. Acyrthosiphon pisum (strain APS) (Acyrthosiphon pisum symbiotic bacterium).